Reading from the N-terminus, the 1201-residue chain is DNA-directed RNA polymerase subunit beta' (1201 aa).

Zn(2+)-binding residues include Cys-60, Cys-62, Cys-75, and Cys-78. Mg(2+) is bound by residues Asp-449, Asp-451, and Asp-453. Residues Cys-818, Cys-892, Cys-899, and Cys-902 each coordinate Zn(2+).

It belongs to the RNA polymerase beta' chain family. As to quaternary structure, the RNAP catalytic core consists of 2 alpha, 1 beta, 1 beta' and 1 omega subunit. When a sigma factor is associated with the core the holoenzyme is formed, which can initiate transcription. Mg(2+) serves as cofactor. The cofactor is Zn(2+).

It catalyses the reaction RNA(n) + a ribonucleoside 5'-triphosphate = RNA(n+1) + diphosphate. In terms of biological role, DNA-dependent RNA polymerase catalyzes the transcription of DNA into RNA using the four ribonucleoside triphosphates as substrates. The polypeptide is DNA-directed RNA polymerase subunit beta' (Listeria monocytogenes serotype 4b (strain F2365)).